The following is a 457-amino-acid chain: Exodeoxyribonuclease 7 large subunit (457 aa).

Belongs to the XseA family. Heterooligomer composed of large and small subunits.

The protein localises to the cytoplasm. The enzyme catalyses Exonucleolytic cleavage in either 5'- to 3'- or 3'- to 5'-direction to yield nucleoside 5'-phosphates.. Functionally, bidirectionally degrades single-stranded DNA into large acid-insoluble oligonucleotides, which are then degraded further into small acid-soluble oligonucleotides. This chain is Exodeoxyribonuclease 7 large subunit, found in Cronobacter sakazakii (strain ATCC BAA-894) (Enterobacter sakazakii).